The sequence spans 252 residues: Carboxy-S-adenosyl-L-methionine synthase (252 aa).

Residues Tyr45, 70–72 (GCS), 95–96 (DN), 123–124 (DI), Asn138, and Arg205 contribute to the S-adenosyl-L-methionine site.

The protein belongs to the class I-like SAM-binding methyltransferase superfamily. Cx-SAM synthase family. Homodimer.

It carries out the reaction prephenate + S-adenosyl-L-methionine = carboxy-S-adenosyl-L-methionine + 3-phenylpyruvate + H2O. Catalyzes the conversion of S-adenosyl-L-methionine (SAM) to carboxy-S-adenosyl-L-methionine (Cx-SAM). In Photorhabdus laumondii subsp. laumondii (strain DSM 15139 / CIP 105565 / TT01) (Photorhabdus luminescens subsp. laumondii), this protein is Carboxy-S-adenosyl-L-methionine synthase.